Reading from the N-terminus, the 344-residue chain is Probable dual-specificity RNA methyltransferase RlmN (344 aa).

Glu-89 functions as the Proton acceptor in the catalytic mechanism. One can recognise a Radical SAM core domain in the interval 95 to 329 (TDQRLTVCVS…VSLRASRGLD (235 aa)). Cys-102 and Cys-334 form a disulfide bridge. The [4Fe-4S] cluster site is built by Cys-109, Cys-113, and Cys-116. Residues 156–157 (GE), Ser-186, 215–217 (SLH), and Asn-291 each bind S-adenosyl-L-methionine. The active-site S-methylcysteine intermediate is Cys-334.

The protein belongs to the radical SAM superfamily. RlmN family. [4Fe-4S] cluster serves as cofactor.

Its subcellular location is the cytoplasm. The catalysed reaction is adenosine(2503) in 23S rRNA + 2 reduced [2Fe-2S]-[ferredoxin] + 2 S-adenosyl-L-methionine = 2-methyladenosine(2503) in 23S rRNA + 5'-deoxyadenosine + L-methionine + 2 oxidized [2Fe-2S]-[ferredoxin] + S-adenosyl-L-homocysteine. It carries out the reaction adenosine(37) in tRNA + 2 reduced [2Fe-2S]-[ferredoxin] + 2 S-adenosyl-L-methionine = 2-methyladenosine(37) in tRNA + 5'-deoxyadenosine + L-methionine + 2 oxidized [2Fe-2S]-[ferredoxin] + S-adenosyl-L-homocysteine. Functionally, specifically methylates position 2 of adenine 2503 in 23S rRNA and position 2 of adenine 37 in tRNAs. This Parasynechococcus marenigrum (strain WH8102) protein is Probable dual-specificity RNA methyltransferase RlmN.